Reading from the N-terminus, the 577-residue chain is MMKRTSLIGQLGQAQQQQTVTLQGWVSRRRDLGGLIFLELRDRSGTVQVQVEPDSPAFAEADRLRAEYVAEIEGTFQPRPESQRKGGLADFEVIASRVKVLNAAKTPPFELDKGESVAEDIRLKYRYLDLRRPEMQRALMLRSKAVTAVTEFLDAEGFIQVETPMLTKSTPEGARDFLVPSRLNPGEFYALPQSPQLFKQLLMIAGFDRYYQLARCFRDEDLRADRQPDFTQLDMEMSFVEQDDVLEVQERLLAHVFRRVLDVELPLPFPRMSYFDAMDRYGSDKPDLRFDSAFTDVTGLFRGGEFAAFASAPSVKVLVAPELTRKQIDELERVAKQNGAGGLAWLRRDGEGFTGGISKFVGGIAPQLIEQTGVAQGGTLLFAAGEWKKAVTALGAVRLALRDLFDLAAGGPQFHVSWVVDFPQLEFDEDSQSWTYMHHPFTAPHPGDVALFGTERQGEMRAQAYDLVMNGFEIGGGSVRIHDPEVQAKMFQAIGFSEEAAREKFGFFLDALEYGTPPHGGIAWGFDRLLMLMSGAGSIREVIAFPKNNRGADLMAQAPSPVEDAQLAEVGVQVRGE.

Position 172 (E172) interacts with L-aspartate. The interval 196-199 (QLFK) is aspartate. Residue R218 participates in L-aspartate binding. ATP is bound by residues 218–220 (RDE) and Q227. L-aspartate is bound at residue H438. Position 473 (E473) interacts with ATP. Residue R480 coordinates L-aspartate. 525–528 (GFDR) is an ATP binding site.

Belongs to the class-II aminoacyl-tRNA synthetase family. Type 1 subfamily. Homodimer.

Its subcellular location is the cytoplasm. The catalysed reaction is tRNA(Asp) + L-aspartate + ATP = L-aspartyl-tRNA(Asp) + AMP + diphosphate. In terms of biological role, catalyzes the attachment of L-aspartate to tRNA(Asp) in a two-step reaction: L-aspartate is first activated by ATP to form Asp-AMP and then transferred to the acceptor end of tRNA(Asp). Is specific for tRNA(Asp) since it cannot aspartylate tRNA(Asn). This Deinococcus radiodurans (strain ATCC 13939 / DSM 20539 / JCM 16871 / CCUG 27074 / LMG 4051 / NBRC 15346 / NCIMB 9279 / VKM B-1422 / R1) protein is Aspartate--tRNA(Asp) ligase (aspS1).